Here is a 222-residue protein sequence, read N- to C-terminus: Sugar fermentation stimulation protein homolog (222 aa).

This sequence belongs to the SfsA family.

This chain is Sugar fermentation stimulation protein homolog, found in Thermotoga neapolitana (strain ATCC 49049 / DSM 4359 / NBRC 107923 / NS-E).